A 484-amino-acid polypeptide reads, in one-letter code: tRNA-2-methylthio-N(6)-dimethylallyladenosine synthase (484 aa).

Positions 29 to 149 (GVFHIHTLGC…LPKLLDQNRA (121 aa)) constitute an MTTase N-terminal domain. Positions 38, 78, 112, 186, 190, and 193 each coordinate [4Fe-4S] cluster. The 230-residue stretch at 172 to 401 (RASRISSWVA…VALQEQITEE (230 aa)) folds into the Radical SAM core domain. In terms of domain architecture, TRAM spans 404–474 (ATFEGRDVEV…RHNLLADPDV (71 aa)).

The protein belongs to the methylthiotransferase family. MiaB subfamily. As to quaternary structure, monomer. It depends on [4Fe-4S] cluster as a cofactor.

The protein resides in the cytoplasm. The catalysed reaction is N(6)-dimethylallyladenosine(37) in tRNA + (sulfur carrier)-SH + AH2 + 2 S-adenosyl-L-methionine = 2-methylsulfanyl-N(6)-dimethylallyladenosine(37) in tRNA + (sulfur carrier)-H + 5'-deoxyadenosine + L-methionine + A + S-adenosyl-L-homocysteine + 2 H(+). Its function is as follows. Catalyzes the methylthiolation of N6-(dimethylallyl)adenosine (i(6)A), leading to the formation of 2-methylthio-N6-(dimethylallyl)adenosine (ms(2)i(6)A) at position 37 in tRNAs that read codons beginning with uridine. The polypeptide is tRNA-2-methylthio-N(6)-dimethylallyladenosine synthase (Bifidobacterium longum subsp. infantis (strain ATCC 15697 / DSM 20088 / JCM 1222 / NCTC 11817 / S12)).